The following is a 259-amino-acid chain: Diaminopimelate epimerase (259 aa).

Residues asparagine 14, glutamine 42, and asparagine 60 each coordinate substrate. Cysteine 69 acts as the Proton donor in catalysis. Residues 70–71 (GN), asparagine 151, asparagine 184, and 202–203 (ER) each bind substrate. The Proton acceptor role is filled by cysteine 211. 212-213 (GS) serves as a coordination point for substrate.

The protein belongs to the diaminopimelate epimerase family. In terms of assembly, homodimer.

Its subcellular location is the cytoplasm. The enzyme catalyses (2S,6S)-2,6-diaminopimelate = meso-2,6-diaminopimelate. Its pathway is amino-acid biosynthesis; L-lysine biosynthesis via DAP pathway; DL-2,6-diaminopimelate from LL-2,6-diaminopimelate: step 1/1. In terms of biological role, catalyzes the stereoinversion of LL-2,6-diaminopimelate (L,L-DAP) to meso-diaminopimelate (meso-DAP), a precursor of L-lysine and an essential component of the bacterial peptidoglycan. This is Diaminopimelate epimerase from Wolbachia sp. subsp. Brugia malayi (strain TRS).